The chain runs to 217 residues: Small ribosomal subunit protein uS3 (217 aa).

The KH type-2 domain occupies I40–R110.

Belongs to the universal ribosomal protein uS3 family. As to quaternary structure, part of the 30S ribosomal subunit. Forms a tight complex with proteins S10 and S14.

In terms of biological role, binds the lower part of the 30S subunit head. Binds mRNA in the 70S ribosome, positioning it for translation. The polypeptide is Small ribosomal subunit protein uS3 (Rickettsia massiliae (strain Mtu5)).